The primary structure comprises 336 residues: Putative transcription factor avaE (336 aa).

Residues Thr-32–Pro-100 constitute a DNA-binding region (WRKY).

It localises to the nucleus. It functions in the pathway secondary metabolite biosynthesis. Putative transcription factor; part of the cluster that mediates the biosynthesis of a highly modified cyclo-arginine-tryptophan dipeptide (cRW). The sequence is that of Putative transcription factor avaE from Aspergillus versicolor.